A 142-amino-acid chain; its full sequence is Large ribosomal subunit protein uL11 (142 aa).

Belongs to the universal ribosomal protein uL11 family. In terms of assembly, part of the ribosomal stalk of the 50S ribosomal subunit. Interacts with L10 and the large rRNA to form the base of the stalk. L10 forms an elongated spine to which L12 dimers bind in a sequential fashion forming a multimeric L10(L12)X complex. In terms of processing, one or more lysine residues are methylated.

In terms of biological role, forms part of the ribosomal stalk which helps the ribosome interact with GTP-bound translation factors. This is Large ribosomal subunit protein uL11 from Aliivibrio fischeri (strain MJ11) (Vibrio fischeri).